We begin with the raw amino-acid sequence, 669 residues long: JmjC domain-containing histone demethylation protein 1 (669 aa).

Positions 1-61 (MTAVAASSRV…RRKKPRTELV (61 aa)) are disordered. 2 stretches are compositionally biased toward polar residues: residues 16 to 27 (ASSSAHPRTLRS) and 36 to 49 (HDSS…QSKQ). The segment at 65-126 (ELDCAACPAV…KWYCQPCITR (62 aa)) adopts a PHD-type zinc-finger fold. 2 disordered regions span residues 131 to 150 (FESG…RPPR) and 220 to 256 (PPDR…QATH). The span at 246-255 (KPARAKKQAT) shows a compositional bias: basic residues. The JmjC domain occupies 332–494 (VTGTPMQAYV…TQWKLVEIEE (163 aa)). H390 and D392 together coordinate Fe cation. Residue K407 participates in substrate binding. Residue H462 participates in Fe cation binding.

It belongs to the JHDM1 histone demethylase family. Fe(2+) serves as cofactor.

The protein localises to the nucleus. The catalysed reaction is N(6),N(6)-dimethyl-L-lysyl(36)-[histone H3] + 2 2-oxoglutarate + 2 O2 = L-lysyl(36)-[histone H3] + 2 formaldehyde + 2 succinate + 2 CO2. Functionally, histone demethylase that specifically demethylates 'Lys-36' of histone H3, thereby playing a central role in histone code. The protein is JmjC domain-containing histone demethylation protein 1 (JHD1) of Mycosarcoma maydis (Corn smut fungus).